The primary structure comprises 360 residues: Isocitrate dehydrogenase [NAD] regulatory subunit B, mitochondrial (360 aa).

A mitochondrion-targeting transit peptide spans 1–113 (MLGRLRTVVK…MELRKALDLY (113 aa)). Substrate is bound by residues Ser-101, Asn-103, Arg-107, and Arg-140. Asp-227 provides a ligand contact to Mg(2+). Residues 284–290 (HHVAADI) and Asn-297 each bind NADP(+).

Belongs to the isocitrate and isopropylmalate dehydrogenases family. Heterooligomer of catalytic and regulatory subunits. Requires Mg(2+) as cofactor. Mn(2+) is required as a cofactor.

It localises to the mitochondrion. It carries out the reaction D-threo-isocitrate + NAD(+) = 2-oxoglutarate + CO2 + NADH. In terms of biological role, performs an essential role in the oxidative function of the citric acid cycle. This chain is Isocitrate dehydrogenase [NAD] regulatory subunit B, mitochondrial (idhB), found in Dictyostelium discoideum (Social amoeba).